The primary structure comprises 1336 residues: Zinc finger protein 335 (1336 aa).

Disordered stretches follow at residues 1 to 108 (MEEN…LVHS) and 199 to 222 (PTST…LAQP). Composition is skewed to low complexity over residues 31 to 45 (TSEA…AATA) and 54 to 65 (SGVGQSSDSGSR). The segment at 247-270 (FKCKMCQYRSSTKATLLRHMRERH) adopts a C2H2-type 1 zinc-finger fold. Disordered stretches follow at residues 282 to 398 (AGKR…PSSS) and 415 to 442 (VSQS…GRPS). Over residues 300–331 (EEGPEEEEEDDDIVDAGAIDDLEEDSDYNPAE) the composition is skewed to acidic residues. Residues 339–349 (LRLQRPTPSTL) show a composition bias toward low complexity. Residues 350 to 361 (RPRRRPGRPRKL) are compositionally biased toward basic residues. Over residues 362–373 (PRLETSDLHDGI) the composition is skewed to basic and acidic residues. Over residues 378 to 387 (VSSQSTQSPP) the composition is skewed to polar residues. 8 C2H2-type zinc fingers span residues 465-487 (YLCR…VNSH), 495-517 (FKCL…MFNH), 523-545 (YKCD…AAVH), 562-584 (FPCP…MKTH), 590-612 (HMCD…LLTH), 621-643 (FKCE…QLSH), 649-672 (FKCS…AVKH), and 678-701 (FACE…RCRH). Disordered stretches follow at residues 732–766 (LKQQ…TPPL) and 961–1013 (LQCG…AAAS). Residues 752–766 (PQEPAPFQPPETPPL) are compositionally biased toward pro residues. Ser975 and Ser1006 each carry phosphoserine. 4 C2H2-type zinc fingers span residues 1018–1040 (FSCK…KRAH), 1046–1068 (FKCP…MAQH), 1074–1096 (HQCN…MLTH), and 1102–1125 (FSCH…QRLH). Residue Lys1021 forms a Glycyl lysine isopeptide (Lys-Gly) (interchain with G-Cter in SUMO2) linkage. At Ser1148 the chain carries Phosphoserine.

It belongs to the krueppel C2H2-type zinc-finger protein family. As to quaternary structure, interacts with NCOA6; may enhance ligand-dependent transcriptional activation by nuclear hormone receptors. Interacts with CNOT6. Interacts with CNOT9; the interaction is direct. Component of a nuclear receptor-mediated transcription complex composed of at least ZNF335, CCAR2 and EMSY; the complex stimulates the transcription of nuclear receptor target genes such as SOX9 and HOXA1. Within the complex interacts with EMSY and interacts (via C-terminus) with CCAR2. Interacts with members of histone H3'Lys4'(H3K4) methyltransferase complexes ASH2L, CXXC1, KMT2A/MLL1, RBBP5, SETD1A and WDR5. Component of a histone methylation complex composed of at least ZNF335, RBBP5, ASH2L and WDR5; the complex may have histone H3-specific methyltransferase activity, however does not have specificity for 'Lys-4' of histone H3. Interacts with RBBP5 and WDR5. Interacts with ASHL2. Components of this complex may associate with components of the ZNF335-CCAR2-EMSY nuclear receptor-mediated transcription complex to form a complex at least composed of ZNF335, HCFC1, CCAR2, EMSY, MKI67, RBBP5, ASH2L and WDR5. Within this complex also interacts with HCFC1 and MKI67.

The protein localises to the nucleus. In terms of biological role, component or associated component of some histone methyltransferase complexes may regulate transcription through recruitment of those complexes on gene promoters. Enhances ligand-dependent transcriptional activation by nuclear hormone receptors. Plays an important role in neural progenitor cell proliferation and self-renewal through the regulation of specific genes involved brain development, including REST. Also controls the expression of genes involved in somatic development and regulates, for instance, lymphoblast proliferation. The protein is Zinc finger protein 335 (Znf335) of Rattus norvegicus (Rat).